The chain runs to 189 residues: Elongation factor P (189 aa).

It belongs to the elongation factor P family.

Its subcellular location is the cytoplasm. It functions in the pathway protein biosynthesis; polypeptide chain elongation. Its function is as follows. Involved in peptide bond synthesis. Stimulates efficient translation and peptide-bond synthesis on native or reconstituted 70S ribosomes in vitro. Probably functions indirectly by altering the affinity of the ribosome for aminoacyl-tRNA, thus increasing their reactivity as acceptors for peptidyl transferase. The sequence is that of Elongation factor P from Rhizobium leguminosarum bv. trifolii (strain WSM2304).